Consider the following 370-residue polypeptide: Putative 8-amino-7-oxononanoate synthase (370 aa).

Arginine 20 contacts substrate. A pyridoxal 5'-phosphate-binding site is contributed by 95 to 96; sequence GY. Histidine 120 is a substrate binding site. Residues serine 167, 192 to 195, and 223 to 226 contribute to the pyridoxal 5'-phosphate site; these read DDAH and TLSK. Position 226 is an N6-(pyridoxal phosphate)lysine (lysine 226). Residue threonine 337 participates in substrate binding.

It belongs to the class-II pyridoxal-phosphate-dependent aminotransferase family. BioF subfamily. In terms of assembly, homodimer. The cofactor is pyridoxal 5'-phosphate.

It carries out the reaction 6-carboxyhexanoyl-[ACP] + L-alanine + H(+) = (8S)-8-amino-7-oxononanoate + holo-[ACP] + CO2. It functions in the pathway cofactor biosynthesis; biotin biosynthesis. Catalyzes the decarboxylative condensation of pimeloyl-[acyl-carrier protein] and L-alanine to produce 8-amino-7-oxononanoate (AON), [acyl-carrier protein], and carbon dioxide. In Methanococcus vannielii (strain ATCC 35089 / DSM 1224 / JCM 13029 / OCM 148 / SB), this protein is Putative 8-amino-7-oxononanoate synthase (bioF).